The sequence spans 207 residues: Thiamine-phosphate synthase (207 aa).

4-amino-2-methyl-5-(diphosphooxymethyl)pyrimidine is bound by residues 37 to 41 (QYRDK) and asparagine 69. The Mg(2+) site is built by aspartate 70 and aspartate 89. Serine 108 lines the 4-amino-2-methyl-5-(diphosphooxymethyl)pyrimidine pocket. 2-[(2R,5Z)-2-carboxy-4-methylthiazol-5(2H)-ylidene]ethyl phosphate is bound at residue 135–137 (SRT). Lysine 138 is a 4-amino-2-methyl-5-(diphosphooxymethyl)pyrimidine binding site. Residue glycine 164 coordinates 2-[(2R,5Z)-2-carboxy-4-methylthiazol-5(2H)-ylidene]ethyl phosphate.

This sequence belongs to the thiamine-phosphate synthase family. It depends on Mg(2+) as a cofactor.

It catalyses the reaction 2-[(2R,5Z)-2-carboxy-4-methylthiazol-5(2H)-ylidene]ethyl phosphate + 4-amino-2-methyl-5-(diphosphooxymethyl)pyrimidine + 2 H(+) = thiamine phosphate + CO2 + diphosphate. The enzyme catalyses 2-(2-carboxy-4-methylthiazol-5-yl)ethyl phosphate + 4-amino-2-methyl-5-(diphosphooxymethyl)pyrimidine + 2 H(+) = thiamine phosphate + CO2 + diphosphate. The catalysed reaction is 4-methyl-5-(2-phosphooxyethyl)-thiazole + 4-amino-2-methyl-5-(diphosphooxymethyl)pyrimidine + H(+) = thiamine phosphate + diphosphate. It participates in cofactor biosynthesis; thiamine diphosphate biosynthesis; thiamine phosphate from 4-amino-2-methyl-5-diphosphomethylpyrimidine and 4-methyl-5-(2-phosphoethyl)-thiazole: step 1/1. Functionally, condenses 4-methyl-5-(beta-hydroxyethyl)thiazole monophosphate (THZ-P) and 2-methyl-4-amino-5-hydroxymethyl pyrimidine pyrophosphate (HMP-PP) to form thiamine monophosphate (TMP). This Chromobacterium violaceum (strain ATCC 12472 / DSM 30191 / JCM 1249 / CCUG 213 / NBRC 12614 / NCIMB 9131 / NCTC 9757 / MK) protein is Thiamine-phosphate synthase.